The primary structure comprises 312 residues: Pyridoxal kinase (312 aa).

Met-1 is subject to N-acetylmethionine. Pyridoxal contacts are provided by Ser-12 and Thr-47. Thr-47 provides a ligand contact to pyridoxal 5'-phosphate. Ser-59 is subject to Phosphoserine. Asp-113 provides a ligand contact to ATP. Na(+) is bound at residue Asp-113. Asp-118 serves as a coordination point for Mg(2+). Thr-148 provides a ligand contact to Na(+). Asn-150–Glu-153 provides a ligand contact to ATP. Position 164 is a phosphoserine (Ser-164). Thr-186 serves as a coordination point for Na(+). Residue Thr-186–Ser-187 participates in ATP binding. Phosphoserine is present on Ser-213. ATP-binding positions include Val-226–Ala-228 and Thr-233. Gly-234–Asp-235 serves as a coordination point for pyridoxal 5'-phosphate. The Proton acceptor role is filled by Asp-235. Ser-285 is subject to Phosphoserine.

The protein belongs to the pyridoxine kinase family. Homodimer. Zn(2+) serves as cofactor. Requires Mg(2+) as cofactor.

It is found in the cytoplasm. It localises to the cytosol. The enzyme catalyses pyridoxal + ATP = pyridoxal 5'-phosphate + ADP + H(+). It carries out the reaction pyridoxamine + ATP = pyridoxamine 5'-phosphate + ADP + H(+). The catalysed reaction is pyridoxine + ATP = pyridoxine 5'-phosphate + ADP + H(+). It functions in the pathway cofactor metabolism; pyridoxal 5'-phosphate salvage; pyridoxal 5'-phosphate from pyridoxal: step 1/1. Its pathway is cofactor metabolism; pyridoxal 5'-phosphate salvage; pyridoxine 5'-phosphate from pyridoxine: step 1/1. It participates in cofactor metabolism; pyridoxal 5'-phosphate salvage; pyridoxamine 5'-phosphate from pyridoxamine: step 1/1. Activity is increased in the presence of K(+)or Na(+). In terms of biological role, catalyzes the phosphorylation of the dietary vitamin B6 vitamers pyridoxal (PL), pyridoxine (PN) and pyridoxamine (PM) to form pyridoxal 5'-phosphate (PLP), pyridoxine 5'-phosphate (PNP) and pyridoxamine 5'-phosphate (PMP), respectively. PLP is the active form of vitamin B6, and acts as a cofactor for over 140 different enzymatic reactions. This Mus musculus (Mouse) protein is Pyridoxal kinase.